A 323-amino-acid polypeptide reads, in one-letter code: Sphingolipid delta(4)-desaturase DES1 (323 aa).

Glycine 2 carries the N-myristoyl glycine lipid modification. 2 helical membrane passes run 41–61 and 68–88; these read HNLI…FYLV and WVIF…TLAI. The short motif at 89–93 is the Histidine box-1 element; the sequence is HEISH. A helical transmembrane segment spans residues 104-124; sequence WNRWFGMFANLSLGVPYSISF. The Histidine box-2 motif lies at 128-132; the sequence is HMDHH. 3 helical membrane passes run 152–172, 184–204, and 209–229; these read FFCT…FYAF, YLEI…YYVF, and LVYM…SGHF. The short motif at 259–263 is the Histidine box-3 element; the sequence is HNEHH. Serine 307 carries the phosphoserine modification.

This sequence belongs to the fatty acid desaturase type 1 family. DEGS subfamily. In terms of assembly, interacts with RLBP1; the interaction increases synthesis of chromophore-precursors by DEGS1. Myristoylation can target the enzyme to the mitochondria leading to an increase in ceramide levels. In terms of tissue distribution, detected in testis. Detected in pachytene spermatocytes and round spermatids. Expressed in retina and retinal pigment epithelium by Mueller cells (at protein level).

The protein localises to the mitochondrion membrane. It is found in the endoplasmic reticulum membrane. The enzyme catalyses an N-acylsphinganine + 2 Fe(II)-[cytochrome b5] + O2 + 2 H(+) = an N-acylsphing-4-enine + 2 Fe(III)-[cytochrome b5] + 2 H2O. It carries out the reaction all-trans-retinol = 11-cis-retinol. The catalysed reaction is all-trans-retinol = 9-cis-retinol. It catalyses the reaction all-trans-retinol = 13-cis-retinol. The enzyme catalyses 11-cis-retinol = 13-cis-retinol. It carries out the reaction 11-cis-retinol = 9-cis-retinol. In terms of biological role, has sphingolipid-delta-4-desaturase activity. Converts D-erythro-sphinganine to D-erythro-sphingosine (E-sphing-4-enine). Catalyzes the equilibrium isomerization of retinols. In Mus musculus (Mouse), this protein is Sphingolipid delta(4)-desaturase DES1.